Reading from the N-terminus, the 436-residue chain is Na(+)/H(+) antiporter NhaA (436 aa).

11 consecutive transmembrane segments (helical) span residues 14–34, 59–79, 95–115, 125–145, 152–172, 176–196, 214–234, 300–320, 336–356, 374–394, and 407–427; these read AGGI…NSTW, LHHW…GLEL, ALPV…YHQF, WGIP…LLAW, IIFL…VIAI, PALH…LLLF, FWYF…FLAF, AIQP…NAGI, IGTC…SSWL, LLGA…IGQL, and LGIL…LFQV.

This sequence belongs to the NhaA Na(+)/H(+) (TC 2.A.33) antiporter family.

The protein resides in the cell inner membrane. The enzyme catalyses Na(+)(in) + 2 H(+)(out) = Na(+)(out) + 2 H(+)(in). Its function is as follows. Na(+)/H(+) antiporter that extrudes sodium in exchange for external protons. The chain is Na(+)/H(+) antiporter NhaA from Acidithiobacillus ferrooxidans (strain ATCC 23270 / DSM 14882 / CIP 104768 / NCIMB 8455) (Ferrobacillus ferrooxidans (strain ATCC 23270)).